We begin with the raw amino-acid sequence, 272 residues long: 2-dehydro-3-deoxyphosphooctonate aldolase (272 aa).

It belongs to the KdsA family.

It localises to the cytoplasm. The catalysed reaction is D-arabinose 5-phosphate + phosphoenolpyruvate + H2O = 3-deoxy-alpha-D-manno-2-octulosonate-8-phosphate + phosphate. Its pathway is carbohydrate biosynthesis; 3-deoxy-D-manno-octulosonate biosynthesis; 3-deoxy-D-manno-octulosonate from D-ribulose 5-phosphate: step 2/3. It participates in bacterial outer membrane biogenesis; lipopolysaccharide biosynthesis. This Trichlorobacter lovleyi (strain ATCC BAA-1151 / DSM 17278 / SZ) (Geobacter lovleyi) protein is 2-dehydro-3-deoxyphosphooctonate aldolase.